The following is a 71-amino-acid chain: Heat-stable enterotoxin B (71 aa).

Residues 1–19 (MKKIILALVLMLFSFCTLG) form the signal peptide. The propeptide occupies 20 to 52 (QETASMHLDDTLSAPIAAEINRKACDTQTPSPS). 3 disulfide bridges follow: Cys-59–Cys-64, Cys-60–Cys-68, and Cys-63–Cys-71.

The protein belongs to the heat-stable enterotoxin family.

Its subcellular location is the secreted. Functionally, toxin which activates the particulate form of guanylate cyclase and increases cyclic GMP levels within the host intestinal epithelial cells. Could play an important role in pathogenesis. The polypeptide is Heat-stable enterotoxin B (ystB) (Yersinia enterocolitica).